Here is a 721-residue protein sequence, read N- to C-terminus: Long-chain-fatty-acid--CoA ligase ACSBG1 (721 aa).

Positions 1-64 (MPRSSEAGYC…SHGLELSAPE (64 aa)) are disordered. Residues 26–43 (QQGASMGTSPDNSQTSSL) are compositionally biased toward polar residues. Phosphoserine is present on residues serine 34, serine 50, serine 53, and serine 70. Residues 279-287 (TSGTTGNPK), 469-474 (AGYGLS), aspartate 547, and arginine 562 contribute to the ATP site. Tyrosine 655 is modified (phosphotyrosine). Lysine 698 serves as a coordination point for ATP.

The protein belongs to the ATP-dependent AMP-binding enzyme family. Bubblegum subfamily. Present in testis, at a lower level in brain, and at a very low level in ovary. Not detected in other tissues. tested. Present in Leydig cells of the adult testis and to a lesser degree in the seminiferous tubules in spermatogonia and Sertoli cells (at protein level).

The protein resides in the cytoplasm. The protein localises to the cytoplasmic vesicle. It localises to the microsome. Its subcellular location is the endoplasmic reticulum. It is found in the cell membrane. The enzyme catalyses a long-chain fatty acid + ATP + CoA = a long-chain fatty acyl-CoA + AMP + diphosphate. It carries out the reaction (E)-hexadec-2-enoate + ATP + CoA = (2E)-hexadecenoyl-CoA + AMP + diphosphate. It catalyses the reaction hexadecanoate + ATP + CoA = hexadecanoyl-CoA + AMP + diphosphate. Its function is as follows. Catalyzes the conversion of fatty acids such as long-chain and very long-chain fatty acids to their active form acyl-CoAs for both synthesis of cellular lipids, and degradation via beta-oxidation. Can activate diverse saturated, monosaturated and polyunsaturated fatty acids. The protein is Long-chain-fatty-acid--CoA ligase ACSBG1 of Rattus norvegicus (Rat).